We begin with the raw amino-acid sequence, 354 residues long: S-adenosylmethionine:tRNA ribosyltransferase-isomerase (354 aa).

This sequence belongs to the QueA family. Monomer.

The protein resides in the cytoplasm. The enzyme catalyses 7-aminomethyl-7-carbaguanosine(34) in tRNA + S-adenosyl-L-methionine = epoxyqueuosine(34) in tRNA + adenine + L-methionine + 2 H(+). Its pathway is tRNA modification; tRNA-queuosine biosynthesis. Transfers and isomerizes the ribose moiety from AdoMet to the 7-aminomethyl group of 7-deazaguanine (preQ1-tRNA) to give epoxyqueuosine (oQ-tRNA). This is S-adenosylmethionine:tRNA ribosyltransferase-isomerase from Salmonella newport (strain SL254).